Here is a 79-residue protein sequence, read N- to C-terminus: Defensin-like protein 54 (79 aa).

Residues 1–27 (MGIKKTSATVFLVIILTISFSYYDVEA) form the signal peptide. Intrachain disulfides connect C39/C76, C43/C67, C52/C74, and C56/C75.

It belongs to the DEFL family.

It localises to the secreted. This Arabidopsis thaliana (Mouse-ear cress) protein is Defensin-like protein 54.